A 485-amino-acid polypeptide reads, in one-letter code: Glutamyl-tRNA(Gln) amidotransferase subunit A (485 aa).

Residues Lys78 and Ser153 each act as charge relay system in the active site. Residue Ser177 is the Acyl-ester intermediate of the active site.

It belongs to the amidase family. GatA subfamily. In terms of assembly, heterotrimer of A, B and C subunits.

The catalysed reaction is L-glutamyl-tRNA(Gln) + L-glutamine + ATP + H2O = L-glutaminyl-tRNA(Gln) + L-glutamate + ADP + phosphate + H(+). Functionally, allows the formation of correctly charged Gln-tRNA(Gln) through the transamidation of misacylated Glu-tRNA(Gln) in organisms which lack glutaminyl-tRNA synthetase. The reaction takes place in the presence of glutamine and ATP through an activated gamma-phospho-Glu-tRNA(Gln). The polypeptide is Glutamyl-tRNA(Gln) amidotransferase subunit A (Bacillus cereus (strain AH820)).